The sequence spans 237 residues: Purine nucleoside phosphorylase DeoD-type (237 aa).

Position 5 (His-5) interacts with a purine D-ribonucleoside. Residues Gly-21, Arg-25, Arg-44, and 88 to 91 each bind phosphate; that span reads RVGS. A purine D-ribonucleoside-binding positions include 180-182 and 204-205; these read EME and SD. Asp-205 serves as the catalytic Proton donor.

Belongs to the PNP/UDP phosphorylase family. In terms of assembly, homohexamer; trimer of homodimers.

The enzyme catalyses a purine D-ribonucleoside + phosphate = a purine nucleobase + alpha-D-ribose 1-phosphate. The catalysed reaction is a purine 2'-deoxy-D-ribonucleoside + phosphate = a purine nucleobase + 2-deoxy-alpha-D-ribose 1-phosphate. Its function is as follows. Catalyzes the reversible phosphorolytic breakdown of the N-glycosidic bond in the beta-(deoxy)ribonucleoside molecules, with the formation of the corresponding free purine bases and pentose-1-phosphate. The sequence is that of Purine nucleoside phosphorylase DeoD-type from Edwardsiella ictaluri (strain 93-146).